A 348-amino-acid polypeptide reads, in one-letter code: Nicotinate-nucleotide pyrophosphorylase [carboxylating], chloroplastic (348 aa).

Residues Met-1–Ser-41 constitute a chloroplast transit peptide. Residues Arg-139, Thr-170–Lys-172, Arg-194, Lys-204, Glu-237, Asp-264, Ser-296–Asn-298, and Ser-317–Ala-319 contribute to the substrate site.

The protein belongs to the NadC/ModD family.

Its subcellular location is the plastid. It is found in the chloroplast. It carries out the reaction nicotinate beta-D-ribonucleotide + CO2 + diphosphate = quinolinate + 5-phospho-alpha-D-ribose 1-diphosphate + 2 H(+). It participates in cofactor biosynthesis; NAD(+) biosynthesis; nicotinate D-ribonucleotide from quinolinate: step 1/1. Involved in the biosynthesis of NAD(+). Catalyzes the conversion of quinolate to nicotinate to nicotinate beta-D-ribonucleotide. The polypeptide is Nicotinate-nucleotide pyrophosphorylase [carboxylating], chloroplastic (Arabidopsis thaliana (Mouse-ear cress)).